The sequence spans 425 residues: Histidinol dehydrogenase (425 aa).

Substrate contacts are provided by serine 231, glutamine 253, and histidine 256. Zn(2+)-binding residues include glutamine 253 and histidine 256. Active-site proton acceptor residues include glutamate 321 and histidine 322. Positions 322, 355, 409, and 414 each coordinate substrate. Aspartate 355 is a Zn(2+) binding site. Histidine 414 is a binding site for Zn(2+).

This sequence belongs to the histidinol dehydrogenase family. The cofactor is Zn(2+).

It catalyses the reaction L-histidinol + 2 NAD(+) + H2O = L-histidine + 2 NADH + 3 H(+). The protein operates within amino-acid biosynthesis; L-histidine biosynthesis; L-histidine from 5-phospho-alpha-D-ribose 1-diphosphate: step 9/9. Catalyzes the sequential NAD-dependent oxidations of L-histidinol to L-histidinaldehyde and then to L-histidine. This Carboxydothermus hydrogenoformans (strain ATCC BAA-161 / DSM 6008 / Z-2901) protein is Histidinol dehydrogenase.